The following is a 494-amino-acid chain: GTPase Der (494 aa).

2 EngA-type G domains span residues 3–166 and 208–381; these read PVVA…VGEK and IKLA…ECAT. Residues 9–16, 56–60, 118–121, 214–221, 261–265, and 326–329 contribute to the GTP site; these read GRPNVGKS, DTGGI, NKTD, DTAGV, and NKWD. One can recognise a KH-like domain in the interval 382 to 466; it reads RRVNTSMLTK…PIRIQFKEGE (85 aa).

Belongs to the TRAFAC class TrmE-Era-EngA-EngB-Septin-like GTPase superfamily. EngA (Der) GTPase family. Associates with the 50S ribosomal subunit.

Its function is as follows. GTPase that plays an essential role in the late steps of ribosome biogenesis. The chain is GTPase Der from Serratia proteamaculans (strain 568).